The primary structure comprises 116 residues: Large ribosomal subunit protein uL18 (116 aa).

It belongs to the universal ribosomal protein uL18 family. Part of the 50S ribosomal subunit; part of the 5S rRNA/L5/L18/L25 subcomplex. Contacts the 5S and 23S rRNAs.

This is one of the proteins that bind and probably mediate the attachment of the 5S RNA into the large ribosomal subunit, where it forms part of the central protuberance. The chain is Large ribosomal subunit protein uL18 from Psychrobacter arcticus (strain DSM 17307 / VKM B-2377 / 273-4).